A 589-amino-acid polypeptide reads, in one-letter code: Type I restriction enzyme EcoAI specificity subunit (589 aa).

This sequence belongs to the type-I restriction system S methylase family. As to quaternary structure, the type I restriction/modification system is composed of three polypeptides R, M and S. The restriction enzyme has stoichiometry R(2)M(2)S(1) while the methyltransferase is M(2)S(1).

Functionally, the specificity (S) subunit of a type I restriction enzyme; this subunit dictates DNA sequence specificity. The M and S subunits together form a methyltransferase (MTase) that methylates A-2 on the top strand and A-3 on the bottom strand of the sequence 5'-GAGN(7)GTCA-3'. In the presence of the R subunit the complex can also act as an endonuclease, binding to the same target sequence but cutting the DNA some distance from this site. Whether the DNA is cut or modified depends on the methylation state of the target sequence. When the target site is unmodified, the DNA is cut. When the target site is hemimethylated, the complex acts as a maintenance MTase modifying the DNA so that both strands become methylated. After locating a non-methylated recognition site, the enzyme complex serves as a molecular motor that translocates DNA in an ATP-dependent manner until a collision occurs that triggers cleavage. This Escherichia coli protein is Type I restriction enzyme EcoAI specificity subunit.